Reading from the N-terminus, the 465-residue chain is Probable oxidoreductase AIM17 (465 aa).

The N-terminal 16 residues, 1-16 (MLRSNLCRGSRILARL), are a transit peptide targeting the mitochondrion. His246, Asp248, and His428 together coordinate Fe cation.

It belongs to the gamma-BBH/TMLD family. It depends on Fe(2+) as a cofactor. Requires L-ascorbate as cofactor.

Its subcellular location is the mitochondrion. This chain is Probable oxidoreductase AIM17 (AIM17), found in Saccharomyces cerevisiae (strain ATCC 204508 / S288c) (Baker's yeast).